The primary structure comprises 2378 residues: Serine/threonine-protein kinase ATM (2378 aa).

One can recognise an FAT domain in the interval 1415–1937 (LSARKRNTMM…LHTILMYDDE (523 aa)). One can recognise a PI3K/PI4K catalytic domain in the interval 2044-2366 (WKDVFTIADG…LLREATSADN (323 aa)). The interval 2050 to 2056 (IADGIST) is G-loop. The segment at 2218–2226 (GLGDRHASN) is catalytic loop. An activation loop region spans residues 2238–2263 (HIDLGMILEYSKRTLPVPEQVPFRIT). An FATC domain is found at 2346 to 2378 (TAQSSNLQIRRLLREATSADNLSRMFCGWMPFL).

This sequence belongs to the PI3/PI4-kinase family. ATM subfamily.

It is found in the nucleus. The enzyme catalyses L-seryl-[protein] + ATP = O-phospho-L-seryl-[protein] + ADP + H(+). The catalysed reaction is L-threonyl-[protein] + ATP = O-phospho-L-threonyl-[protein] + ADP + H(+). Serine/threonine protein kinase which activates checkpoint signaling in the presence of DNA double strand breaks (DSBs) and other forms of DNA damage induced by ionizing radiation and other genotoxic stresses such as UV. Plays a role in maintaining genome stability. The chain is Serine/threonine-protein kinase ATM (atm-1) from Caenorhabditis elegans.